The following is a 40-amino-acid chain: Toxin CSTX-17 (40 aa).

Cystine bridges form between Cys-2-Cys-17, Cys-9-Cys-22, Cys-16-Cys-33, and Cys-24-Cys-31. Trp-40 bears the Tryptophan amide mark.

In terms of processing, contains 4 disulfide bonds. As to expression, expressed by the venom gland.

The protein resides in the secreted. This is Toxin CSTX-17 from Cupiennius salei (American wandering spider).